Consider the following 291-residue polypeptide: Putative carboxymethylenebutenolidase (291 aa).

Residues 1-40 (MTAFDADLRSLAAQTTLSRRTVIATSLATGFALAVQPVAA) form the signal peptide. Catalysis depends on residues Cys170, Asp227, and His259.

This sequence belongs to the dienelactone hydrolase family.

The catalysed reaction is 2-(5-oxo-2,5-dihydrofuran-2-ylidene)acetate + H2O = 4-oxohex-2-enedioate + H(+). The polypeptide is Putative carboxymethylenebutenolidase (Methylorubrum extorquens (strain ATCC 14718 / DSM 1338 / JCM 2805 / NCIMB 9133 / AM1) (Methylobacterium extorquens)).